The following is a 611-amino-acid chain: Protein ral2 (611 aa).

Kelch repeat units lie at residues glutamate 43–aspartate 91, lysine 96–glycine 149, and tyrosine 175–lysine 224. Serine 604 is modified (phosphoserine).

In terms of biological role, essential for mating and for recognition of the mating pheromone, and for the determination of cell shape. Implicated in activation of the ras1 protein. In Schizosaccharomyces pombe (strain 972 / ATCC 24843) (Fission yeast), this protein is Protein ral2 (ral2).